Consider the following 85-residue polypeptide: Large ribosomal subunit protein bL27 (85 aa).

A disordered region spans residues 1 to 21 (MAHKKAGGSTRNGRDSNAQRL). A compositionally biased stretch (polar residues) spans 9–19 (STRNGRDSNAQ).

Belongs to the bacterial ribosomal protein bL27 family.

The sequence is that of Large ribosomal subunit protein bL27 from Pectobacterium carotovorum subsp. carotovorum (strain PC1).